A 590-amino-acid polypeptide reads, in one-letter code: Acetolactate synthase large subunit (590 aa).

A thiamine diphosphate-binding site is contributed by glutamate 61. FAD is bound by residues arginine 163, 271-292 (HGTAYANFAVSECDLLIALGAR), and 314-333 (DIDPAEVGKNRIPQVAIVGD). Positions 405–484 (QHQMWSAQFL…VKIIIINNRW (80 aa)) are thiamine pyrophosphate binding. Residues aspartate 455 and asparagine 482 each coordinate Mg(2+).

Belongs to the TPP enzyme family. As to quaternary structure, dimer of large and small chains. Requires Mg(2+) as cofactor. Thiamine diphosphate is required as a cofactor.

Its subcellular location is the plastid. It is found in the chloroplast. The catalysed reaction is 2 pyruvate + H(+) = (2S)-2-acetolactate + CO2. It functions in the pathway amino-acid biosynthesis; L-isoleucine biosynthesis; L-isoleucine from 2-oxobutanoate: step 1/4. The protein operates within amino-acid biosynthesis; L-valine biosynthesis; L-valine from pyruvate: step 1/4. This chain is Acetolactate synthase large subunit (ilvB), found in Pyropia yezoensis (Susabi-nori).